The sequence spans 343 residues: MIEVGIVGGSGYGAIELIRLLIQHPNVNIKYIFSHSKQDQPIKETFPHLEQLTYHYETLNSEGIECDVIFFATPSNVSKHIVPQLLSKRIKIIDLSGDFRLTNRATYETYYGETAASQEYLNEANYSIAEWSNVNAQTTQLIANPGCFPTATLLALHPLIDKDIVKQDNIIIDAKTGVSGAGRSLAQHVHFAEMNENLSAYAIGKHKHKPEIEQYLSLLAQQEVKVTFTPHLVPMTRGILSTIYIKLNHAFTNEDLHNLFKDYYEDKPFVRIRSLGQFPKTKEVYGSNYCDIGIYVDEENQTAILVSVIDNLVKGASGQAIQNLNLMYGWKENTGLLQSPVYP.

Cys147 is an active-site residue.

The protein belongs to the NAGSA dehydrogenase family. Type 1 subfamily.

It localises to the cytoplasm. It catalyses the reaction N-acetyl-L-glutamate 5-semialdehyde + phosphate + NADP(+) = N-acetyl-L-glutamyl 5-phosphate + NADPH + H(+). The protein operates within amino-acid biosynthesis; L-arginine biosynthesis; N(2)-acetyl-L-ornithine from L-glutamate: step 3/4. Functionally, catalyzes the NADPH-dependent reduction of N-acetyl-5-glutamyl phosphate to yield N-acetyl-L-glutamate 5-semialdehyde. This Staphylococcus saprophyticus subsp. saprophyticus (strain ATCC 15305 / DSM 20229 / NCIMB 8711 / NCTC 7292 / S-41) protein is N-acetyl-gamma-glutamyl-phosphate reductase.